The chain runs to 159 residues: Ribose-5-phosphate isomerase B (159 aa).

D-ribulose 5-phosphate contacts are provided by residues 8-9 and 67-71; these read DH and GSGNG. The Proton acceptor role is filled by Glu-72. Residue His-99 is the Proton donor of the active site. Positions 100, 110, 134, and 138 each coordinate D-ribulose 5-phosphate.

The protein belongs to the LacAB/RpiB family. In terms of assembly, homodimer.

The enzyme catalyses aldehydo-D-ribose 5-phosphate = D-ribulose 5-phosphate. The protein operates within carbohydrate degradation; pentose phosphate pathway; D-ribose 5-phosphate from D-ribulose 5-phosphate (non-oxidative stage): step 1/1. Catalyzes the interconversion of ribulose-5-P and ribose-5-P. This chain is Ribose-5-phosphate isomerase B, found in Mycolicibacterium paratuberculosis (strain ATCC BAA-968 / K-10) (Mycobacterium paratuberculosis).